The sequence spans 225 residues: PKHD-type hydroxylase YbiX (225 aa).

The region spanning 78–177 (TLSTPLFNRY…RVASFMWIQS (100 aa)) is the Fe2OG dioxygenase domain. Positions 96, 98, and 158 each coordinate Fe cation. Residue arginine 168 coordinates 2-oxoglutarate.

Requires Fe(2+) as cofactor. L-ascorbate serves as cofactor.

The protein is PKHD-type hydroxylase YbiX of Escherichia coli O7:K1 (strain IAI39 / ExPEC).